The chain runs to 174 residues: Chromophore lyase CpcS/CpeS 1 (174 aa).

The protein belongs to the CpcS/CpeS biliprotein lyase family.

Functionally, covalently attaches a chromophore to Cys residue(s) of phycobiliproteins. The chain is Chromophore lyase CpcS/CpeS 1 from Trichodesmium erythraeum (strain IMS101).